The following is a 337-amino-acid chain: MAKVKVGINGFGRIGRLVARVILQRDDCELVAVNDPFISTDYMTYMFKYDSVHGQCKSHEIKLKDEKTLLFGETPVAVFGCRNPEEIPWGQAGADFVVESTGVFTDKDKAAAHLKGGAKKVVISAPSKDAPMFVVGVNEHEYKSDLNIVSNASCTTNCLAPLAKVINDRFGIVEGLMTTVHAMTATQKTVDGPSMKDWRGGRAASFNIIPSSTGAAKAVGKVLPALNGKLTGMAFRVPTCDVSVVDLTVRIEKAASYEQIKAAIKEESEGKLKGILGYTEDDLVSTDFIGDNRSSIFDAKAGISLNDNFVKLVSWYDNEWGYSTRVVDLIMHISKCQ.

The binding to NAD stretch occupies residues 1–151 (MAKVKVGING…YKSDLNIVSN (151 aa)). Residues 13 to 14 (RI), Asp35, and Arg82 contribute to the NAD(+) site. The tract at residues 152 to 337 (ASCTTNCLAP…DLIMHISKCQ (186 aa)) is catalytic. Residues 153 to 155 (SCT), Thr184, 213 to 214 (TG), and Arg236 contribute to the D-glyceraldehyde 3-phosphate site. Cys154 acts as the Nucleophile in catalysis. Residue Asn318 participates in NAD(+) binding.

The protein belongs to the glyceraldehyde-3-phosphate dehydrogenase family. Homotetramer.

The protein localises to the cytoplasm. The enzyme catalyses D-glyceraldehyde 3-phosphate + phosphate + NAD(+) = (2R)-3-phospho-glyceroyl phosphate + NADH + H(+). It participates in carbohydrate degradation; glycolysis; pyruvate from D-glyceraldehyde 3-phosphate: step 1/5. Its function is as follows. Key enzyme in glycolysis that catalyzes the first step of the pathway by converting D-glyceraldehyde 3-phosphate (G3P) into 3-phospho-D-glyceroyl phosphate. Essential for the maintenance of cellular ATP levels and carbohydrate metabolism. The polypeptide is Glyceraldehyde-3-phosphate dehydrogenase, cytosolic (GAPC) (Mesembryanthemum crystallinum (Common ice plant)).